A 917-amino-acid polypeptide reads, in one-letter code: Translation initiation factor IF-2 (917 aa).

Residues 1–312 form a disordered region; the sequence is MEEQKSIKET…KGGREENENT (312 aa). The span at 20-30 shows a compositional bias: basic residues; sequence TKKKLVIKKKA. A compositionally biased stretch (polar residues) spans 41–59; the sequence is PGAQGQTTATEAKQSSPAS. Basic and acidic residues-rich tracts occupy residues 60 to 76 and 95 to 118; these read SDKK…EAKR and RPDR…RKPE. Gly residues-rich tracts occupy residues 132–141, 167–256, and 281–293; these read SGGGQGGGNQ, QTGG…GYQG, and APGG…GPGG. Positions 297–312 are enriched in basic and acidic residues; sequence RVFDKEKGGREENENT. The tr-type G domain occupies 414 to 587; sequence TRPPVVTIMG…ELLDHKANPK (174 aa). A G1 region spans residues 423–430; sequence GHVDHGKT. 423–430 contributes to the GTP binding site; it reads GHVDHGKT. The segment at 448–452 is G2; the sequence is GITQH. The segment at 469–472 is G3; that stretch reads DTPG. GTP is bound by residues 469–473 and 523–526; these read DTPGH and NKID. Residues 523–526 form a G4 region; sequence NKID. The segment at 559-561 is G5; that stretch reads SAK.

This sequence belongs to the TRAFAC class translation factor GTPase superfamily. Classic translation factor GTPase family. IF-2 subfamily.

It is found in the cytoplasm. Functionally, one of the essential components for the initiation of protein synthesis. Protects formylmethionyl-tRNA from spontaneous hydrolysis and promotes its binding to the 30S ribosomal subunits. Also involved in the hydrolysis of GTP during the formation of the 70S ribosomal complex. The polypeptide is Translation initiation factor IF-2 (Leptospira biflexa serovar Patoc (strain Patoc 1 / ATCC 23582 / Paris)).